Consider the following 265-residue polypeptide: 3-methyl-2-oxobutanoate hydroxymethyltransferase (265 aa).

2 residues coordinate Mg(2+): D45 and D84. Residues 45–46, D84, and K114 each bind 3-methyl-2-oxobutanoate; that span reads DS. E116 serves as a coordination point for Mg(2+). Residue E183 is the Proton acceptor of the active site.

Belongs to the PanB family. As to quaternary structure, homodecamer; pentamer of dimers. It depends on Mg(2+) as a cofactor.

It is found in the cytoplasm. The enzyme catalyses 3-methyl-2-oxobutanoate + (6R)-5,10-methylene-5,6,7,8-tetrahydrofolate + H2O = 2-dehydropantoate + (6S)-5,6,7,8-tetrahydrofolate. It functions in the pathway cofactor biosynthesis; (R)-pantothenate biosynthesis; (R)-pantoate from 3-methyl-2-oxobutanoate: step 1/2. In terms of biological role, catalyzes the reversible reaction in which hydroxymethyl group from 5,10-methylenetetrahydrofolate is transferred onto alpha-ketoisovalerate to form ketopantoate. The polypeptide is 3-methyl-2-oxobutanoate hydroxymethyltransferase (Salinibacter ruber (strain DSM 13855 / M31)).